Here is an 87-residue protein sequence, read N- to C-terminus: Putative sodium channel toxin Ts38 (87 aa).

Residues 1-22 form the signal peptide; sequence MKHLKFYSILFLFSIFVYKVNA. Disulfide bonds link cysteine 42/cysteine 65, cysteine 51/cysteine 72, and cysteine 55/cysteine 74.

Belongs to the long (3 C-C) scorpion toxin superfamily. Sodium channel inhibitor family. Expressed by the venom gland.

It localises to the secreted. In terms of biological role, putative sodium channel toxin. The sequence is that of Putative sodium channel toxin Ts38 from Tityus serrulatus (Brazilian scorpion).